A 95-amino-acid polypeptide reads, in one-letter code: uncharacterized protein (95 aa).

The segment at residues 1–24 (MKKLATLTALAGALTMAVATAAQA) is a signal peptide (or 21). The span at 55–89 (EGKCGADKAKSAEGKCGEGKCGADKAKSAEGKCGE) shows a compositional bias: basic and acidic residues. Residues 55-95 (EGKCGADKAKSAEGKCGEGKCGADKAKSAEGKCGEGKCGSK) are disordered.

This is an uncharacterized protein from Haemophilus influenzae (strain ATCC 51907 / DSM 11121 / KW20 / Rd).